Here is a 239-residue protein sequence, read N- to C-terminus: Myogenic factor 6 (239 aa).

Residues 27-64 are disordered; it reads QHLDMPGVSPLYDGNHSPLSPGPDNVPSETGGESSGDE. In terms of domain architecture, bHLH spans 96-147; the sequence is DRRKAATLRERRRLKKINEAFDALKRKSVANPNQRLPKVEILRSAISYIERL. The tract at residues 155 to 184 is disordered; that stretch reads DEQERGQSGASDTRNDKEQNRPSGGDYCWK.

In terms of assembly, efficient DNA binding requires dimerization with another bHLH protein.

The protein resides in the nucleus. Its function is as follows. Involved in muscle differentiation (myogenic factor). Induces fibroblasts to differentiate into myoblasts. Probable sequence specific DNA-binding protein. This Tetraodon nigroviridis (Spotted green pufferfish) protein is Myogenic factor 6 (myf6).